The sequence spans 352 residues: tRNA pseudouridine synthase D (352 aa).

The active-site Nucleophile is D81. Residues 157-303 form the TRUD domain; sequence GVPNYFGGQR…MSHERRILRL (147 aa).

Belongs to the pseudouridine synthase TruD family.

The catalysed reaction is uridine(13) in tRNA = pseudouridine(13) in tRNA. Functionally, responsible for synthesis of pseudouridine from uracil-13 in transfer RNAs. This is tRNA pseudouridine synthase D from Pseudomonas putida (strain W619).